Reading from the N-terminus, the 483-residue chain is Chromatin structure-remodeling complex protein RSC6 (483 aa).

Disordered stretches follow at residues 142–183 (KRKR…EAES) and 273–309 (AQDG…DKPE). Low complexity predominate over residues 148-158 (SLSLPLNLQQP). Over residues 171–180 (DNGEDEDSAE) the composition is skewed to acidic residues.

The protein to yeast SNF12. As to quaternary structure, interacts directly with RSC8. Component of the two forms of the RSC complex composed of at least either RSC1 or RSC2, and ARP7, ARP9, LDB7, NPL6, RSC3, RSC30, RSC4, RSC58, RSC6, RSC8, RSC9, SFH1, STH1, HTL1 and probably RTT102. The complexes interact with histone and histone variant components of centromeric chromatin.

Its subcellular location is the nucleus. Functionally, component of the chromatin structure-remodeling complex (RSC), which is involved in transcription regulation and nucleosome positioning. RSC is responsible for the transfer of a histone octamer from a nucleosome core particle to naked DNA. The reaction requires ATP and involves an activated RSC-nucleosome intermediate. Remodeling reaction also involves DNA translocation, DNA twist and conformational change. As a reconfigurer of centromeric and flanking nucleosomes, RSC complex is required both for proper kinetochore function in chromosome segregation and, via a PKC1-dependent signaling pathway, for organization of the cellular cytoskeleton. This subunit is essential for mitotic growth and suppresses formamide sensitivity of the RSC8 mutants. In Saccharomyces cerevisiae (strain ATCC 204508 / S288c) (Baker's yeast), this protein is Chromatin structure-remodeling complex protein RSC6 (RSC6).